The following is a 27-amino-acid chain: Palustrin-1d (27 aa).

A disulfide bridge links cysteine 21 with cysteine 27.

Expressed by the skin glands.

It is found in the secreted. Its function is as follows. Antimicrobial activity against Gram-negative bacterium E.coli. This Lithobates palustris (Pickerel frog) protein is Palustrin-1d.